A 115-amino-acid polypeptide reads, in one-letter code: Large ribosomal subunit protein bL19 (115 aa).

It belongs to the bacterial ribosomal protein bL19 family.

This protein is located at the 30S-50S ribosomal subunit interface and may play a role in the structure and function of the aminoacyl-tRNA binding site. The polypeptide is Large ribosomal subunit protein bL19 (Thermosipho africanus (strain TCF52B)).